The chain runs to 87 residues: NADH dehydrogenase [ubiquinone] 1 alpha subcomplex subunit 4-like 2 (87 aa).

This sequence belongs to the complex I NDUFA4 subunit family.

This chain is NADH dehydrogenase [ubiquinone] 1 alpha subcomplex subunit 4-like 2 (Ndufa4l2), found in Mus musculus (Mouse).